A 955-amino-acid chain; its full sequence is Mediator of RNA polymerase II transcription subunit 16 (955 aa).

A disordered region spans residues A855 to Q874. Residues P857–T873 are compositionally biased toward polar residues.

Belongs to the Mediator complex subunit 16 family. Component of the Mediator complex.

It localises to the nucleus. Its function is as follows. Component of the Mediator complex, a coactivator involved in the regulated transcription of nearly all RNA polymerase II-dependent genes. Mediator functions as a bridge to convey information from gene-specific regulatory proteins to the basal RNA polymerase II transcription machinery. Mediator is recruited to promoters by direct interactions with regulatory proteins and serves as a scaffold for the assembly of a functional preinitiation complex with RNA polymerase II and the general transcription factors. The protein is Mediator of RNA polymerase II transcription subunit 16 (sin4) of Aspergillus fumigatus (strain ATCC MYA-4609 / CBS 101355 / FGSC A1100 / Af293) (Neosartorya fumigata).